Here is a 100-residue protein sequence, read N- to C-terminus: Urease subunit gamma 2 (100 aa).

Belongs to the urease gamma subunit family. As to quaternary structure, heterotrimer of UreA (gamma), UreB (beta) and UreC (alpha) subunits. Three heterotrimers associate to form the active enzyme.

It is found in the cytoplasm. The enzyme catalyses urea + 2 H2O + H(+) = hydrogencarbonate + 2 NH4(+). Its pathway is nitrogen metabolism; urea degradation; CO(2) and NH(3) from urea (urease route): step 1/1. In terms of biological role, disrupting the ure2 operon has no effect on urease activity or pathogen survival in BALB/c mice when administered orally. The protein is Urease subunit gamma 2 of Brucella abortus (strain 2308).